Reading from the N-terminus, the 507-residue chain is Ribose import ATP-binding protein RbsA 2 (507 aa).

ABC transporter domains lie at 7 to 245 and 249 to 498; these read FSLD…VGRN and LFTR…MPQS. 39–46 provides a ligand contact to ATP; sequence GENGAGKS.

Belongs to the ABC transporter superfamily. Ribose importer (TC 3.A.1.2.1) family. As to quaternary structure, the complex is composed of an ATP-binding protein (RbsA), two transmembrane proteins (RbsC) and a solute-binding protein (RbsB).

It is found in the cell inner membrane. The enzyme catalyses D-ribose(out) + ATP + H2O = D-ribose(in) + ADP + phosphate + H(+). Part of the ABC transporter complex RbsABC involved in ribose import. Responsible for energy coupling to the transport system. The protein is Ribose import ATP-binding protein RbsA 2 of Mesorhizobium japonicum (strain LMG 29417 / CECT 9101 / MAFF 303099) (Mesorhizobium loti (strain MAFF 303099)).